Consider the following 248-residue polypeptide: UDP-2,3-diacylglucosamine hydrolase (248 aa).

5 residues coordinate Mn(2+): Asp8, His10, Asp41, Asn79, and His114. Position 79-80 (79-80 (NR)) interacts with substrate. Positions 122, 160, 171, 174, and 202 each coordinate substrate. Residues His202 and His204 each coordinate Mn(2+).

Belongs to the LpxH family. It depends on Mn(2+) as a cofactor.

It localises to the cell inner membrane. It catalyses the reaction UDP-2-N,3-O-bis[(3R)-3-hydroxytetradecanoyl]-alpha-D-glucosamine + H2O = 2-N,3-O-bis[(3R)-3-hydroxytetradecanoyl]-alpha-D-glucosaminyl 1-phosphate + UMP + 2 H(+). It functions in the pathway glycolipid biosynthesis; lipid IV(A) biosynthesis; lipid IV(A) from (3R)-3-hydroxytetradecanoyl-[acyl-carrier-protein] and UDP-N-acetyl-alpha-D-glucosamine: step 4/6. Its function is as follows. Hydrolyzes the pyrophosphate bond of UDP-2,3-diacylglucosamine to yield 2,3-diacylglucosamine 1-phosphate (lipid X) and UMP by catalyzing the attack of water at the alpha-P atom. Involved in the biosynthesis of lipid A, a phosphorylated glycolipid that anchors the lipopolysaccharide to the outer membrane of the cell. The chain is UDP-2,3-diacylglucosamine hydrolase from Stenotrophomonas maltophilia (strain K279a).